A 589-amino-acid chain; its full sequence is Monocopper oxidase-like protein SKS1 (589 aa).

The signal sequence occupies residues 1–24; sequence MAATCSLLASFLLCFALLSAVSFA. Asparagine 62, asparagine 111, asparagine 204, asparagine 243, asparagine 260, asparagine 296, asparagine 345, asparagine 365, asparagine 433, and asparagine 447 each carry an N-linked (GlcNAc...) asparagine glycan. The interval 322–356 is disordered; sequence LPVPKTDVSSPWSAMSQPKTIRQNTSASGARPNPQ. Positions 328–349 are enriched in polar residues; it reads DVSSPWSAMSQPKTIRQNTSAS. Residue histidine 455 coordinates Cu cation. Serine 563 carries GPI-anchor amidated serine lipidation. Positions 564–589 are cleaved as a propeptide — removed in mature form; that stretch reads AATSILNGHLKLMLLMVLLASVFRFC.

This sequence belongs to the multicopper oxidase family. It depends on Cu cation as a cofactor.

The protein localises to the cell membrane. The polypeptide is Monocopper oxidase-like protein SKS1 (SKS1) (Arabidopsis thaliana (Mouse-ear cress)).